The following is a 406-amino-acid chain: MSTFPAPVLGTPLSPTATRVMLLGAGELGKEVVIALQRLGVEVIAVDRYADAPGHQVAHRAHVVSMTDPQALRQVIEQERPHVVVPEIEAIATDLLVALEDEGAVRVTPTARAAHLTMNREGIRRLAAETLGLPTSPYRFVDTEQALREAIDGGIGYPCVIKPVMSSSGKGQSIIRSADDIAAAWRYAQEGGRVGAGRVIVEGFIEFDYEITLLTVRARGADGQIVTQFCEPIGHRQVDGDYVESWQPHPMSPAALQRSREIALAVTGDLGGLGIFGVELFVAGDQVWFSEVSPRPHDTGMVTLISQVQNEFELHARALLGLPVDTRLRQPGASSVIYGGVEARGVAFEGVAQALAEPGTDIRLFGKPESFAKRRMGVGLAVADDVDQARAKAARVSQAVRVRAGA.

Residues glutamate 27 to leucine 28 and glutamate 87 contribute to the N(1)-(5-phospho-beta-D-ribosyl)glycinamide site. ATP-binding positions include arginine 120, lysine 162, serine 167–glutamine 172, glutamate 202–isoleucine 205, and glutamate 210. One can recognise an ATP-grasp domain in the interval arginine 125 to leucine 320. Positions 279 and 291 each coordinate Mg(2+). Residues aspartate 298, lysine 367, and arginine 374 to arginine 375 each bind N(1)-(5-phospho-beta-D-ribosyl)glycinamide.

It belongs to the PurK/PurT family. As to quaternary structure, homodimer.

It catalyses the reaction N(1)-(5-phospho-beta-D-ribosyl)glycinamide + formate + ATP = N(2)-formyl-N(1)-(5-phospho-beta-D-ribosyl)glycinamide + ADP + phosphate + H(+). Its pathway is purine metabolism; IMP biosynthesis via de novo pathway; N(2)-formyl-N(1)-(5-phospho-D-ribosyl)glycinamide from N(1)-(5-phospho-D-ribosyl)glycinamide (formate route): step 1/1. Functionally, involved in the de novo purine biosynthesis. Catalyzes the transfer of formate to 5-phospho-ribosyl-glycinamide (GAR), producing 5-phospho-ribosyl-N-formylglycinamide (FGAR). Formate is provided by PurU via hydrolysis of 10-formyl-tetrahydrofolate. This is Formate-dependent phosphoribosylglycinamide formyltransferase from Bordetella bronchiseptica (strain ATCC BAA-588 / NCTC 13252 / RB50) (Alcaligenes bronchisepticus).